A 219-amino-acid chain; its full sequence is Ropporin-1-like protein (219 aa).

The region spanning 17–54 (PELPDILKQFTKAAIRTQPHDLLQWSAAYFDSLSKGEP) is the RIIa domain.

Belongs to the ropporin family. In terms of assembly, component of axonemal radial spoke complexes.

It is found in the cell projection. The protein resides in the cilium. Its subcellular location is the flagellum. Functionally, functions as part of axonemal radial spoke complexes that play an important part in the motility of sperm and cilia. Important for male fertility. Involved in fibrous sheath integrity and sperm motility, plays a role in PKA-dependent signaling processes required for spermatozoa capacitation. The protein is Ropporin-1-like protein (ropn1l) of Xenopus laevis (African clawed frog).